The sequence spans 372 residues: Ketol-acid reductoisomerase (NADP(+)) (372 aa).

The segment at methionine 1–aspartate 25 is disordered. Residues threonine 10–aspartate 19 show a composition bias toward acidic residues. One can recognise a KARI N-terminal Rossmann domain in the interval leucine 24–threonine 205. Residues tyrosine 49–glutamine 52, serine 75, serine 77, and aspartate 107–glutamine 110 contribute to the NADP(+) site. Histidine 131 is an active-site residue. Glycine 157 is an NADP(+) binding site. In terms of domain architecture, KARI C-terminal knotted spans threonine 206 to serine 351. Mg(2+) contacts are provided by aspartate 214, glutamate 218, glutamate 250, and glutamate 254. Residue serine 275 participates in substrate binding. The disordered stretch occupies residues serine 351–aspartate 372. Over residues aspartate 352–aspartate 372 the composition is skewed to acidic residues.

It belongs to the ketol-acid reductoisomerase family. It depends on Mg(2+) as a cofactor.

It carries out the reaction (2R)-2,3-dihydroxy-3-methylbutanoate + NADP(+) = (2S)-2-acetolactate + NADPH + H(+). It catalyses the reaction (2R,3R)-2,3-dihydroxy-3-methylpentanoate + NADP(+) = (S)-2-ethyl-2-hydroxy-3-oxobutanoate + NADPH + H(+). It functions in the pathway amino-acid biosynthesis; L-isoleucine biosynthesis; L-isoleucine from 2-oxobutanoate: step 2/4. Its pathway is amino-acid biosynthesis; L-valine biosynthesis; L-valine from pyruvate: step 2/4. Functionally, involved in the biosynthesis of branched-chain amino acids (BCAA). Catalyzes an alkyl-migration followed by a ketol-acid reduction of (S)-2-acetolactate (S2AL) to yield (R)-2,3-dihydroxy-isovalerate. In the isomerase reaction, S2AL is rearranged via a Mg-dependent methyl migration to produce 3-hydroxy-3-methyl-2-ketobutyrate (HMKB). In the reductase reaction, this 2-ketoacid undergoes a metal-dependent reduction by NADPH to yield (R)-2,3-dihydroxy-isovalerate. The sequence is that of Ketol-acid reductoisomerase (NADP(+)) from Haloquadratum walsbyi (strain DSM 16790 / HBSQ001).